Consider the following 233-residue polypeptide: Orotidine 5'-phosphate decarboxylase (233 aa).

Residues Asp-9, Lys-31, 58-67 (DLKLHDIPNT), Thr-120, Arg-182, Gln-191, Gly-211, and Arg-212 contribute to the substrate site. Catalysis depends on Lys-60, which acts as the Proton donor.

This sequence belongs to the OMP decarboxylase family. Type 1 subfamily. Homodimer.

It carries out the reaction orotidine 5'-phosphate + H(+) = UMP + CO2. It participates in pyrimidine metabolism; UMP biosynthesis via de novo pathway; UMP from orotate: step 2/2. Functionally, catalyzes the decarboxylation of orotidine 5'-monophosphate (OMP) to uridine 5'-monophosphate (UMP). This chain is Orotidine 5'-phosphate decarboxylase, found in Listeria monocytogenes serovar 1/2a (strain ATCC BAA-679 / EGD-e).